The chain runs to 318 residues: MMNKLQALRQFSTIVADTGDISAIQSYQPEDTTTNPSLILNATKIPAYRHLIDRSVAWAKRQSSDPKQHQIDATDKLAVDIGVEILKLIPGRISTEVDACLSYDIHASIEKAQKLISLYHEADIHKDRILIKLAATWQGIRAAEALEKLGIRCNLTLLFSFAQARACAEAGVFLISPFVGRILDWYKKNSDTKEFLPTQDPRVLSVQKIYHYYKKHGYETVVMGASFRNTAEILELAGCDRLTISPALLQELSEQQGTVEQKLVFRGALKEKPTPLTESEFYWQHNQDPMAVEKLSEGIRKFAEDQEKLKNVISNLLA.

The active-site Schiff-base intermediate with substrate is lysine 132.

It belongs to the transaldolase family. Type 1 subfamily. As to quaternary structure, homodimer.

The protein localises to the cytoplasm. It catalyses the reaction D-sedoheptulose 7-phosphate + D-glyceraldehyde 3-phosphate = D-erythrose 4-phosphate + beta-D-fructose 6-phosphate. It participates in carbohydrate degradation; pentose phosphate pathway; D-glyceraldehyde 3-phosphate and beta-D-fructose 6-phosphate from D-ribose 5-phosphate and D-xylulose 5-phosphate (non-oxidative stage): step 2/3. Transaldolase is important for the balance of metabolites in the pentose-phosphate pathway. The chain is Transaldolase from Hamiltonella defensa subsp. Acyrthosiphon pisum (strain 5AT).